The following is a 156-amino-acid chain: Large ribosomal subunit protein uL15 (156 aa).

Residues 25–48 (RGIGCGKGKTSGRGHKGQKARSGV) are disordered. The segment covering 34 to 43 (TSGRGHKGQK) has biased composition (basic residues).

The protein belongs to the universal ribosomal protein uL15 family. As to quaternary structure, part of the 50S ribosomal subunit.

In terms of biological role, binds to the 23S rRNA. The polypeptide is Large ribosomal subunit protein uL15 (Wolbachia pipientis subsp. Culex pipiens (strain wPip)).